The primary structure comprises 159 residues: Protein HydD (159 aa).

Belongs to the peptidase A31 family.

The polypeptide is Protein HydD (hydD) (Wolinella succinogenes (strain ATCC 29543 / DSM 1740 / CCUG 13145 / JCM 31913 / LMG 7466 / NCTC 11488 / FDC 602W) (Vibrio succinogenes)).